A 242-amino-acid chain; its full sequence is Glutamine transport ATP-binding protein GlnQ (242 aa).

The ABC transporter domain occupies 2 to 236 (ITFQNVNKHY…PKEERARLFL (235 aa)). 34 to 41 (GPSGSGKS) is a binding site for ATP.

The protein belongs to the ABC transporter superfamily. The complex is composed of two ATP-binding proteins (GlnQ), two transmembrane proteins (GlnM and GlnP) and a solute-binding protein (GlnH).

It localises to the cell membrane. Part of the ABC transporter complex GlnHMPQ involved in glutamine transport. Probably responsible for energy coupling to the transport system. This is Glutamine transport ATP-binding protein GlnQ (glnQ) from Bacillus subtilis (strain 168).